A 213-amino-acid polypeptide reads, in one-letter code: ATP synthase peripheral stalk subunit OSCP, mitochondrial (213 aa).

A mitochondrion-targeting transit peptide spans 1 to 23 (MAAPAVSGLSRQVRYFSTSVVRP). The SIFI-degron signature appears at 5–23 (AVSGLSRQVRYFSTSVVRP). N6-acetyllysine is present on residues lysine 54, lysine 60, lysine 70, and lysine 73. N6-succinyllysine is present on lysine 90. 2 positions are modified to N6-acetyllysine; alternate: lysine 158 and lysine 162. Residues lysine 158 and lysine 162 each carry the N6-succinyllysine; alternate modification. Lysine 172, lysine 176, and lysine 192 each carry N6-acetyllysine. Lysine 199 is modified (N6-succinyllysine).

The protein belongs to the ATPase delta chain family. In terms of assembly, component of the ATP synthase complex composed at least of ATP5F1A/subunit alpha, ATP5F1B/subunit beta, ATP5MC1/subunit c (homooctomer), MT-ATP6/subunit a, MT-ATP8/subunit 8, ATP5ME/subunit e, ATP5MF/subunit f, ATP5MG/subunit g, ATP5MK/subunit k, ATP5MJ/subunit j, ATP5F1C/subunit gamma, ATP5F1D/subunit delta, ATP5F1E/subunit epsilon, ATP5PF/subunit F6, ATP5PB/subunit b, ATP5PD/subunit d, ATP5PO/subunit OSCP. ATP synthase complex consists of a soluble F(1) head domain (subunits alpha(3) and beta(3)) - the catalytic core - and a membrane F(0) domain - the membrane proton channel (subunits c, a, 8, e, f, g, k and j). These two domains are linked by a central stalk (subunits gamma, delta, and epsilon) rotating inside the F1 region and a stationary peripheral stalk (subunits F6, b, d, and OSCP). In terms of processing, acetylation at Lys-162 decreases ATP production. Deacetylated by SIRT3. In response to mitochondrial stress, the precursor protein is ubiquitinated by the SIFI complex in the cytoplasm before mitochondrial import, leading to its degradation. Within the SIFI complex, UBR4 initiates ubiquitin chain that are further elongated or branched by KCMF1.

The protein localises to the mitochondrion. Its subcellular location is the mitochondrion inner membrane. Subunit OSCP, of the mitochondrial membrane ATP synthase complex (F(1)F(0) ATP synthase or Complex V) that produces ATP from ADP in the presence of a proton gradient across the membrane which is generated by electron transport complexes of the respiratory chain. ATP synthase complex consist of a soluble F(1) head domain - the catalytic core - and a membrane F(1) domain - the membrane proton channel. These two domains are linked by a central stalk rotating inside the F(1) region and a stationary peripheral stalk. During catalysis, ATP synthesis in the catalytic domain of F(1) is coupled via a rotary mechanism of the central stalk subunits to proton translocation. In vivo, can only synthesize ATP although its ATP hydrolase activity can be activated artificially in vitro. Part of the complex F(0) domain. Part of the complex F(0) domain and the peripheric stalk, which acts as a stator to hold the catalytic alpha(3)beta(3) subcomplex and subunit a/ATP6 static relative to the rotary elements. This chain is ATP synthase peripheral stalk subunit OSCP, mitochondrial, found in Plecturocebus moloch (Dusky titi monkey).